The primary structure comprises 1054 residues: Reverse gyrase (1054 aa).

An RG N-terminal-type zinc finger spans residues 1–43 (MIPVVYSNLCPVCGGDLESKEIEKHVCFRKKRSLCLFPEDFLL). Zn(2+)-binding residues include C10, C13, C27, and C35. A disulfide bridge links C35 with C650. 4 residues coordinate ATP: Q61, K84, T85, and S86. The 181-residue stretch at 65–245 (AKRILRKESF…FRQLLNFDIG (181 aa)) folds into the Helicase ATP-binding domain. A DEAD box motif is present at residues 182 to 185 (DDVD). The latch region stretch occupies residues 352–427 (PSFRVTIEDI…EGEVIFPDLR (76 aa)). The segment at 502–1054 (DLIKPALFIV…DLYAEIKSID (553 aa)) is topoisomerase I. The 157-residue stretch at 506–662 (PALFIVESPT…VKRAEFHEVT (157 aa)) folds into the Toprim domain. Mg(2+) is bound at residue E512. The RG C-terminal-type zinc-finger motif lies at 581–609 (IKRCRDCGYQFTEDRESCPKCGSENVDNS). Positions 584, 587, 598, and 601 each coordinate Zn(2+). Residue D631 participates in Mg(2+) binding. Positions 677 to 1054 (DENLVKAQVV…DLYAEIKSID (378 aa)) constitute a Topo IA-type catalytic domain. The active-site O-(5'-phospho-DNA)-tyrosine intermediate is the Y809.

In the N-terminal section; belongs to the DEAD box helicase family. DDVD subfamily. The protein in the C-terminal section; belongs to the type IA topoisomerase family. Monomer. Requires Zn(2+) as cofactor. It depends on Mg(2+) as a cofactor.

The protein localises to the cytoplasm. The enzyme catalyses ATP + H2O = ADP + phosphate + H(+). Functionally, modifies the topological state of DNA by introducing positive supercoils in an ATP-dependent process, increasing the linking number in steps of +1. Very efficient supercoiling occurs on relaxed DNA with a single-stranded bubble; the minimal bubble is 20 nucleotides (nt) and up to 10 positive supercoils can be introduced into a 3.1 kb plasmid with a 50 nt bubble. Positively supercoils DNA with all (d)NTPS, although it requires about 10-fold more of non-(d)ATP. In the absence of ATP (or at low levels of enzyme), or in the presence of ADP, relaxes negative supercoils. Only relaxes positive supercoils when the substrate contains a bubble. Also promotes strand annealing of complementary ssDNA circles. Binds to single-stranded DNA, transiently cleaves and then rejoins the ends, introducing a positive supercoil in the process. The scissile phosphodiester is attacked by the catalytic tyrosine of the enzyme, resulting in the formation of a DNA-(5'-phosphotyrosyl)-enzyme intermediate. Probably involved in rewinding DNA strands in regions of the chromosome that have opened up to allow replication, transcription, DNA repair and/or for DNA protection. In vitro protects DNA against degradation at 90 degrees Celsius, reducing dsDNA breakage about 8-fold; ATP hydrolysis is not necessary, while ADP decreases the protection somewhat. Coats all forms of dsDNA; the DNA is protected against cleavage and transcription. Recognizes nicked DNA and forms a coat at the nicking site, which may help hold DNA in a structure amenable to repair. This is Reverse gyrase from Archaeoglobus fulgidus (strain ATCC 49558 / DSM 4304 / JCM 9628 / NBRC 100126 / VC-16).